The following is a 656-amino-acid chain: Pyoverdine export ATP-binding/permease protein PvdT (656 aa).

Residues 6-245 (IDLRAIRKSY…SANPAALQAV (240 aa)) enclose the ABC transporter domain. 43-50 (GASGSGKS) contributes to the ATP binding site. 4 helical membrane-spanning segments follow: residues 284–304 (ALTLLGIVIGVASVVVMLAVG), 538–558 (IAAISLLVGGIGVMNIMLMTV), 589–609 (LSVVGGLAGVVLALGMGAALL), and 619–639 (VPAVAGAFACALVTGVIFGFM).

Belongs to the ABC transporter superfamily. Macrolide exporter (TC 3.A.1.122) family. As to quaternary structure, part of the tripartite efflux system PvdRT-OpmQ, which is composed of an inner membrane component with both ATPase and permease domains, PvdT, a periplasmic membrane fusion protein, PvdR, and an outer membrane component, OpmQ.

The protein localises to the cell inner membrane. Part of the tripartite efflux system PvdRT-OpmQ required for the secretion into the extracellular milieu of the siderophore pyoverdine (PVD), which is involved in iron acquisition. This subunit binds PVD and drives its secretion by hydrolyzing ATP. The system is responsible for export of newly synthesized PVD after the final steps of biosynthesis have taken place in the periplasm. It is also responsible for recycling of PVD after internalization of ferri-PVD into the periplasm by the outer-membrane receptor FpvA and release of iron from PVD, thus making PVD available for new cycles of iron uptake. In Pseudomonas savastanoi pv. phaseolicola (strain 1448A / Race 6) (Pseudomonas syringae pv. phaseolicola (strain 1448A / Race 6)), this protein is Pyoverdine export ATP-binding/permease protein PvdT.